The following is a 343-amino-acid chain: Uroporphyrinogen decarboxylase (343 aa).

Substrate contacts are provided by residues 23-27 (RQAGR), Asp-73, Tyr-151, Ser-206, and His-322.

This sequence belongs to the uroporphyrinogen decarboxylase family. As to quaternary structure, homodimer.

Its subcellular location is the cytoplasm. The enzyme catalyses uroporphyrinogen III + 4 H(+) = coproporphyrinogen III + 4 CO2. The protein operates within porphyrin-containing compound metabolism; protoporphyrin-IX biosynthesis; coproporphyrinogen-III from 5-aminolevulinate: step 4/4. In terms of biological role, catalyzes the decarboxylation of four acetate groups of uroporphyrinogen-III to yield coproporphyrinogen-III. The polypeptide is Uroporphyrinogen decarboxylase (Granulibacter bethesdensis (strain ATCC BAA-1260 / CGDNIH1)).